Reading from the N-terminus, the 570-residue chain is Urease subunit alpha 1 (570 aa).

Residues 131 to 570 (GGIDTHVHFI…VPMAQRYFLF (440 aa)) enclose the Urease domain. Residues His136, His138, and Lys219 each coordinate Ni(2+). Lys219 is subject to N6-carboxylysine. His221 is a binding site for substrate. Ni(2+) is bound by residues His248 and His274. His322 serves as the catalytic Proton donor. Residue Asp362 participates in Ni(2+) binding.

Belongs to the metallo-dependent hydrolases superfamily. Urease alpha subunit family. As to quaternary structure, heterotrimer of UreA (gamma), UreB (beta) and UreC (alpha) subunits. Three heterotrimers associate to form the active enzyme. The cofactor is Ni cation. In terms of processing, carboxylation allows a single lysine to coordinate two nickel ions.

It localises to the cytoplasm. It catalyses the reaction urea + 2 H2O + H(+) = hydrogencarbonate + 2 NH4(+). Its pathway is nitrogen metabolism; urea degradation; CO(2) and NH(3) from urea (urease route): step 1/1. This chain is Urease subunit alpha 1, found in Brucella melitensis biotype 1 (strain ATCC 23456 / CCUG 17765 / NCTC 10094 / 16M).